A 157-amino-acid chain; its full sequence is Putative electron transport protein YsaA (157 aa).

4Fe-4S ferredoxin-type domains follow at residues Asn-2 to Cys-32, Lys-48 to Gly-80, Gly-80 to Ser-109, and Lys-112 to Val-144. Positions 12, 15, 18, 22, 58, 61, 66, 70, 89, 92, 95, 99, 118, 121, 130, and 134 each coordinate [4Fe-4S] cluster.

The sequence is that of Putative electron transport protein YsaA (ysaA) from Escherichia coli (strain K12).